The primary structure comprises 196 residues: Peptidyl-tRNA hydrolase (196 aa).

H15 is a binding site for tRNA. H20 serves as the catalytic Proton acceptor. TRNA is bound by residues Y66, N68, and N114.

Belongs to the PTH family. In terms of assembly, monomer.

It localises to the cytoplasm. The catalysed reaction is an N-acyl-L-alpha-aminoacyl-tRNA + H2O = an N-acyl-L-amino acid + a tRNA + H(+). Its function is as follows. Hydrolyzes ribosome-free peptidyl-tRNAs (with 1 or more amino acids incorporated), which drop off the ribosome during protein synthesis, or as a result of ribosome stalling. Catalyzes the release of premature peptidyl moieties from peptidyl-tRNA molecules trapped in stalled 50S ribosomal subunits, and thus maintains levels of free tRNAs and 50S ribosomes. In Polynucleobacter asymbioticus (strain DSM 18221 / CIP 109841 / QLW-P1DMWA-1) (Polynucleobacter necessarius subsp. asymbioticus), this protein is Peptidyl-tRNA hydrolase.